We begin with the raw amino-acid sequence, 433 residues long: ATP-dependent protease ATPase subunit HslU (433 aa).

Residues valine 18, 60–65 (GVGKTE), aspartate 246, glutamate 311, and arginine 383 each bind ATP.

Belongs to the ClpX chaperone family. HslU subfamily. A double ring-shaped homohexamer of HslV is capped on each side by a ring-shaped HslU homohexamer. The assembly of the HslU/HslV complex is dependent on binding of ATP.

It is found in the cytoplasm. Its function is as follows. ATPase subunit of a proteasome-like degradation complex; this subunit has chaperone activity. The binding of ATP and its subsequent hydrolysis by HslU are essential for unfolding of protein substrates subsequently hydrolyzed by HslV. HslU recognizes the N-terminal part of its protein substrates and unfolds these before they are guided to HslV for hydrolysis. This is ATP-dependent protease ATPase subunit HslU from Rhodopseudomonas palustris (strain BisB5).